Here is a 134-residue protein sequence, read N- to C-terminus: Small ribosomal subunit protein uS8c (134 aa).

This sequence belongs to the universal ribosomal protein uS8 family. In terms of assembly, part of the 30S ribosomal subunit.

Its subcellular location is the plastid. The protein resides in the chloroplast. In terms of biological role, one of the primary rRNA binding proteins, it binds directly to 16S rRNA central domain where it helps coordinate assembly of the platform of the 30S subunit. In Daucus carota (Wild carrot), this protein is Small ribosomal subunit protein uS8c (rps8).